A 293-amino-acid polypeptide reads, in one-letter code: Protease HtpX homolog (293 aa).

2 helical membrane-spanning segments follow: residues 4–24 (VILF…TLRI) and 40–60 (ALLM…LLIS). Histidine 146 serves as a coordination point for Zn(2+). Glutamate 147 is a catalytic residue. Histidine 150 serves as a coordination point for Zn(2+). Transmembrane regions (helical) follow at residues 161–181 (LIQG…GYFV) and 198–218 (VTVI…VAWF). A Zn(2+)-binding site is contributed by glutamate 223.

It belongs to the peptidase M48B family. Zn(2+) is required as a cofactor.

It localises to the cell inner membrane. The chain is Protease HtpX homolog from Bordetella avium (strain 197N).